The chain runs to 365 residues: UDP-N-acetylglucosamine--N-acetylmuramyl-(pentapeptide) pyrophosphoryl-undecaprenol N-acetylglucosamine transferase (365 aa).

Residues threonine 17–glycine 19, asparagine 129, arginine 167, serine 194, isoleucine 250, alanine 269–glutamate 274, and glutamine 295 each bind UDP-N-acetyl-alpha-D-glucosamine.

This sequence belongs to the glycosyltransferase 28 family. MurG subfamily.

The protein resides in the cell inner membrane. The enzyme catalyses di-trans,octa-cis-undecaprenyl diphospho-N-acetyl-alpha-D-muramoyl-L-alanyl-D-glutamyl-meso-2,6-diaminopimeloyl-D-alanyl-D-alanine + UDP-N-acetyl-alpha-D-glucosamine = di-trans,octa-cis-undecaprenyl diphospho-[N-acetyl-alpha-D-glucosaminyl-(1-&gt;4)]-N-acetyl-alpha-D-muramoyl-L-alanyl-D-glutamyl-meso-2,6-diaminopimeloyl-D-alanyl-D-alanine + UDP + H(+). It participates in cell wall biogenesis; peptidoglycan biosynthesis. In terms of biological role, cell wall formation. Catalyzes the transfer of a GlcNAc subunit on undecaprenyl-pyrophosphoryl-MurNAc-pentapeptide (lipid intermediate I) to form undecaprenyl-pyrophosphoryl-MurNAc-(pentapeptide)GlcNAc (lipid intermediate II). The protein is UDP-N-acetylglucosamine--N-acetylmuramyl-(pentapeptide) pyrophosphoryl-undecaprenol N-acetylglucosamine transferase of Shewanella violacea (strain JCM 10179 / CIP 106290 / LMG 19151 / DSS12).